We begin with the raw amino-acid sequence, 199 residues long: NAD(P)H dehydrogenase (quinone) (199 aa).

One can recognise a Flavodoxin-like domain in the interval 4 to 190 (VLVLYYSAYG…AGARYQGRMI (187 aa)). FMN is bound by residues 10-15 (SAYGHI) and 78-80 (TRF). Tyrosine 12 is an NAD(+) binding site. Tryptophan 98 serves as a coordination point for substrate. Residues 113 to 119 (SSATQHG) and histidine 134 contribute to the FMN site.

Belongs to the WrbA family. FMN is required as a cofactor.

The catalysed reaction is a quinone + NADH + H(+) = a quinol + NAD(+). It carries out the reaction a quinone + NADPH + H(+) = a quinol + NADP(+). This is NAD(P)H dehydrogenase (quinone) from Nitrobacter winogradskyi (strain ATCC 25391 / DSM 10237 / CIP 104748 / NCIMB 11846 / Nb-255).